Consider the following 349-residue polypeptide: Hydroxymethylglutaryl-CoA synthase (349 aa).

Residues Asp-30 and Ala-31 each contribute to the (3S)-3-hydroxy-3-methylglutaryl-CoA site. The Proton donor/acceptor role is filled by Glu-82. Residues Cys-114 and Thr-155 each coordinate (3S)-3-hydroxy-3-methylglutaryl-CoA. Residue Cys-114 is the Acyl-thioester intermediate of the active site. Arg-203 contacts CoA. Residues Thr-205 and His-238 each contribute to the (3S)-3-hydroxy-3-methylglutaryl-CoA site. His-238 (proton donor/acceptor) is an active-site residue. CoA is bound at residue Lys-243. (3S)-3-hydroxy-3-methylglutaryl-CoA-binding residues include Asn-270 and Ser-300.

It belongs to the thiolase-like superfamily. Archaeal HMG-CoA synthase family. In terms of assembly, interacts with acetoacetyl-CoA thiolase that catalyzes the precedent step in the pathway and with a DUF35 protein. The acetoacetyl-CoA thiolase/HMG-CoA synthase complex channels the intermediate via a fused CoA-binding site, which allows for efficient coupling of the endergonic thiolase reaction with the exergonic HMGCS reaction.

The catalysed reaction is acetoacetyl-CoA + acetyl-CoA + H2O = (3S)-3-hydroxy-3-methylglutaryl-CoA + CoA + H(+). It participates in metabolic intermediate biosynthesis; (R)-mevalonate biosynthesis; (R)-mevalonate from acetyl-CoA: step 2/3. Catalyzes the condensation of acetyl-CoA with acetoacetyl-CoA to form 3-hydroxy-3-methylglutaryl-CoA (HMG-CoA). Functions in the mevalonate (MVA) pathway leading to isopentenyl diphosphate (IPP), a key precursor for the biosynthesis of isoprenoid compounds that are building blocks of archaeal membrane lipids. The protein is Hydroxymethylglutaryl-CoA synthase of Methanococcus vannielii (strain ATCC 35089 / DSM 1224 / JCM 13029 / OCM 148 / SB).